Here is a 442-residue protein sequence, read N- to C-terminus: Small RNA 2'-O-methyltransferase (442 aa).

S-adenosyl-L-methionine is bound by residues glycine 125 and aspartate 151. Positions 209, 212, 213, and 260 each coordinate Mg(2+).

The protein belongs to the methyltransferase superfamily. HEN1 family. The cofactor is Mg(2+). As to expression, broadly expressed in the germline and somatic tissues in both hermaphrodites and males.

The protein localises to the cytoplasm. It is found in the nucleus. Its subcellular location is the nucleoplasm. The protein resides in the cytoplasmic granule. It catalyses the reaction small RNA 3'-end nucleotide + S-adenosyl-L-methionine = small RNA 3'-end 2'-O-methylnucleotide + S-adenosyl-L-homocysteine + H(+). Functionally, methyltransferase that adds a 2'-O-methyl group at the 3'-end of PIWI-interacting RNAs (piRNAs) and small interfering RNAs (siRNAs) which are classes of regulatory RNAs that are involved in gene silencing in endogenous RNA interference (RNAi) pathways. Methylation protects the 3'-end of small RNAs from tailing and trimming and could constitute a recognition signal for appropriate argonaute machineries. Methylates and stabilizes 26G-siRNAs (a class of 26 nucleotide siRNAs that possess a monophosphorylated guanine residue at the 5'-end) when they are bound by argonaute protein ergo-1. This occurs in the female germline and embryo, but not in the male germline. Does not methylate 26G-siRNAs bound by argonaute proteins alg-3 or alg-4. Methylates and stabilizes 21U-piRNAs, which are a class of 21 nucleotide piRNAs that possess a uracil residue at the 5'-end, in the male and female germline. In addition, may play a role in exogenous RNAi (exoRNAi) pathways in the germline. This chain is Small RNA 2'-O-methyltransferase, found in Caenorhabditis elegans.